The sequence spans 466 residues: Asparagine--tRNA ligase (466 aa).

The protein belongs to the class-II aminoacyl-tRNA synthetase family. As to quaternary structure, homodimer.

It is found in the cytoplasm. It catalyses the reaction tRNA(Asn) + L-asparagine + ATP = L-asparaginyl-tRNA(Asn) + AMP + diphosphate + H(+). The protein is Asparagine--tRNA ligase of Salmonella choleraesuis (strain SC-B67).